The following is a 217-amino-acid chain: MLO-like protein (217 aa).

Transmembrane regions (helical) follow at residues 35-55 (FKVV…FLLS), 59-79 (GWVA…VVGT), and 119-139 (LVLF…AFFI).

This sequence belongs to the MLO family.

The protein localises to the membrane. Functionally, may be involved in modulation of pathogen defense and leaf cell death. In Linum usitatissimum (Flax), this protein is MLO-like protein.